The sequence spans 269 residues: RBPJ-interacting and tubulin-associated protein 1 (269 aa).

The Nuclear export signal motif lies at 5–17 (VELAISGMQTLHV). Disordered stretches follow at residues 67–94 (GTGV…TLTP) and 145–269 (PATP…PPWK). A compositionally biased stretch (low complexity) spans 79–93 (SCESTSSSGSTPTLT). Positions 92-108 (LTPRKKNKYRLISHTPS) match the Nuclear localization signal motif. The interval 128–156 (WMARGDAAKLHALFWTPPATPRGSHSPRP) is interaction with RBPJ/RBPSUH. Positions 156–269 (PRETPVRCVH…ATQKTKPPWK (114 aa)) are interaction with tubulin. Polar residues-rich tracts occupy residues 202-220 (LTHP…SPCT) and 247-269 (VSVS…PPWK).

It belongs to the RITA family. In terms of assembly, interacts with RBPJ/RBPSUH.

Its subcellular location is the cytoplasm. It localises to the nucleus. The protein resides in the cytoskeleton. The protein localises to the microtubule organizing center. It is found in the centrosome. Tubulin-binding protein that acts as a negative regulator of Notch signaling pathway. Shuttles between the cytoplasm and the nucleus and mediates the nuclear export of RBPJ/RBPSUH, thereby preventing the interaction between RBPJ/RBPSUH and NICD product of Notch proteins (Notch intracellular domain), leading to down-regulate Notch-mediated transcription. May play a role in neurogenesis. The polypeptide is RBPJ-interacting and tubulin-associated protein 1 (RITA1) (Bos taurus (Bovine)).